Here is a 200-residue protein sequence, read N- to C-terminus: Recombination protein RecR (200 aa).

A C4-type zinc finger spans residues 58–73; the sequence is CEVCHNLAEEGLCAIC. In terms of domain architecture, Toprim spans 81-176; the sequence is GLICVVEEPV…DISRLAYGMP (96 aa).

It belongs to the RecR family.

Its function is as follows. May play a role in DNA repair. It seems to be involved in an RecBC-independent recombinational process of DNA repair. It may act with RecF and RecO. This chain is Recombination protein RecR, found in Magnetococcus marinus (strain ATCC BAA-1437 / JCM 17883 / MC-1).